The sequence spans 273 residues: Zinc finger protein 80 (273 aa).

2 C2H2-type zinc fingers span residues 49–71 (YKCK…HQIH) and 77–99 (YECQ…MRIH). The segment at 105–127 (CKCVECGKVFNRRSHLLCYRQIH) adopts a C2H2-type 3; atypical zinc-finger fold. 4 C2H2-type zinc fingers span residues 133–155 (YECS…RMTH), 161–183 (FGCK…MKIH), 189–211 (YKCG…SMTH), and 217–239 (YECK…TRSH).

Belongs to the krueppel C2H2-type zinc-finger protein family.

The protein localises to the nucleus. Its function is as follows. May be involved in transcriptional regulation. This is Zinc finger protein 80 (ZNF80) from Gorilla gorilla gorilla (Western lowland gorilla).